Reading from the N-terminus, the 249-residue chain is BPI fold-containing family A member 1 (249 aa).

The first 15 residues, 1 to 15 (MFQVAGLIVFCGLLA), serve as a signal peptide directing secretion. The tract at residues 81-86 (LLGGLL) is important for surfactant activity and antibacterial properties. An N-linked (GlcNAc...) asparagine glycan is attached at Asn-151. Cys-173 and Cys-217 form a disulfide bridge.

It belongs to the BPI/LBP/Plunc superfamily. Plunc family. As to quaternary structure, monomer. Interacts (via N-terminus) with SCNN1B, a subunit of the heterotrimeric epithelial sodium channel (ENaC); this inhibits proteolytic activation of ENaC. In terms of tissue distribution, expressed in lung and trachea.

It localises to the secreted. In terms of biological role, lipid-binding protein which shows high specificity for the surfactant phospholipid dipalmitoylphosphatidylcholine (DPPC). Plays a role in the innate immune responses of the upper airways. Reduces the surface tension in secretions from airway epithelia and inhibits the formation of biofilm by pathogenic Gram-negative bacteria, such as P.aeruginosa and K.pneumoniae. Negatively regulates proteolytic cleavage of SCNN1G, an event that is required for activation of the epithelial sodium channel (ENaC), and thereby contributes to airway surface liquid homeostasis and proper clearance of mucus. Plays a role in the airway inflammatory response after exposure to irritants. May attract macrophages and neutrophils. This chain is BPI fold-containing family A member 1 (BPIFA1), found in Sus scrofa (Pig).